The primary structure comprises 325 residues: Tetraacyldisaccharide 4'-kinase (325 aa).

ATP is bound at residue 55–62; sequence TAGGNGKT.

The protein belongs to the LpxK family.

It carries out the reaction a lipid A disaccharide + ATP = a lipid IVA + ADP + H(+). It participates in glycolipid biosynthesis; lipid IV(A) biosynthesis; lipid IV(A) from (3R)-3-hydroxytetradecanoyl-[acyl-carrier-protein] and UDP-N-acetyl-alpha-D-glucosamine: step 6/6. Functionally, transfers the gamma-phosphate of ATP to the 4'-position of a tetraacyldisaccharide 1-phosphate intermediate (termed DS-1-P) to form tetraacyldisaccharide 1,4'-bis-phosphate (lipid IVA). This is Tetraacyldisaccharide 4'-kinase from Salmonella choleraesuis (strain SC-B67).